The primary structure comprises 398 residues: DJ-1 protein homolog E (398 aa).

2 consecutive PfpI endopeptidase domains span residues 7 to 199 (KSAL…ESLG) and 210 to 393 (ASVL…TALG).

Belongs to the peptidase C56 family. In terms of assembly, homotrimer. In terms of tissue distribution, expressed in roots and cauline leaves.

Functionally, may be involved in oxidative stress response. This Arabidopsis thaliana (Mouse-ear cress) protein is DJ-1 protein homolog E (DJ1E).